We begin with the raw amino-acid sequence, 247 residues long: Adenosylcobinamide-GDP ribazoletransferase (247 aa).

5 consecutive transmembrane segments (helical) span residues 1 to 21 (MLRL…PFSF), 37 to 57 (LVGL…ALAL), 61 to 81 (VADL…HLDG), 109 to 129 (AVGV…LFAV), and 176 to 196 (VAVA…LPGI).

Belongs to the CobS family. Mg(2+) serves as cofactor.

It is found in the cell inner membrane. The enzyme catalyses alpha-ribazole + adenosylcob(III)inamide-GDP = adenosylcob(III)alamin + GMP + H(+). The catalysed reaction is alpha-ribazole 5'-phosphate + adenosylcob(III)inamide-GDP = adenosylcob(III)alamin 5'-phosphate + GMP + H(+). It participates in cofactor biosynthesis; adenosylcobalamin biosynthesis; adenosylcobalamin from cob(II)yrinate a,c-diamide: step 7/7. Joins adenosylcobinamide-GDP and alpha-ribazole to generate adenosylcobalamin (Ado-cobalamin). Also synthesizes adenosylcobalamin 5'-phosphate from adenosylcobinamide-GDP and alpha-ribazole 5'-phosphate. The polypeptide is Adenosylcobinamide-GDP ribazoletransferase (Geotalea daltonii (strain DSM 22248 / JCM 15807 / FRC-32) (Geobacter daltonii)).